A 312-amino-acid chain; its full sequence is Olfactory receptor 51B6 (312 aa).

At 1 to 23 (MGLNKSASTFQLTGFPGMEKAHH) the chain is on the extracellular side. Residue Asn4 is glycosylated (N-linked (GlcNAc...) asparagine). The helical transmembrane segment at 24–44 (WIFIPLLAAYISILLGNGTLL) threads the bilayer. Over 45–52 (FLIRNDHN) the chain is Cytoplasmic. A helical membrane pass occupies residues 53–73 (LHEPMYYFLAMLAATDLGVTL). Over 74 to 97 (TTMPTVLGVLWLDHREIGHGACFS) the chain is Extracellular. The cysteines at positions 95 and 187 are disulfide-linked. The helical transmembrane segment at 98-118 (QAYFIHTLSVMESGVLLAMAY) threads the bilayer. Residues 119–137 (DCFITIRSPLRYTSILTNT) are Cytoplasmic-facing. The helical transmembrane segment at 138-158 (QVMKIGVRVLTRAGLSIMPIV) threads the bilayer. The Extracellular segment spans residues 159–194 (VRLHWFPYCRSHVLSHAFCLHQDVIKLACADITFNR). A helical transmembrane segment spans residues 195 to 215 (LYPVVVLFAMVLLDFLIIFFS). The Cytoplasmic portion of the chain corresponds to 216 to 235 (YILILKTVMGIGSGGERAKA). Residues 236–256 (LNTCVSHICCILVFYVTVVCL) form a helical membrane-spanning segment. The Extracellular portion of the chain corresponds to 257-271 (TFIHRFGKHVPHVVH). Residues 272-292 (ITMSYIHFLFPPFMNPFIYSI) traverse the membrane as a helical segment. The Cytoplasmic segment spans residues 293 to 312 (KTKQIQSGILRLFSLPHSRA).

Belongs to the G-protein coupled receptor 1 family.

It localises to the cell membrane. In terms of biological role, odorant receptor. This is Olfactory receptor 51B6 (OR51B6) from Homo sapiens (Human).